A 283-amino-acid polypeptide reads, in one-letter code: 2-dehydro-3-deoxyphosphooctonate aldolase (283 aa).

The protein belongs to the KdsA family.

Its subcellular location is the cytoplasm. It catalyses the reaction D-arabinose 5-phosphate + phosphoenolpyruvate + H2O = 3-deoxy-alpha-D-manno-2-octulosonate-8-phosphate + phosphate. It functions in the pathway carbohydrate biosynthesis; 3-deoxy-D-manno-octulosonate biosynthesis; 3-deoxy-D-manno-octulosonate from D-ribulose 5-phosphate: step 2/3. It participates in bacterial outer membrane biogenesis; lipopolysaccharide biosynthesis. The chain is 2-dehydro-3-deoxyphosphooctonate aldolase from Laribacter hongkongensis (strain HLHK9).